The chain runs to 706 residues: MQLRNILQASSLISGLSLAADSSSTTGDGYAPSIIPCPSDDTSLVRNASGLSTAETDWLKKRDAYTKEALHSFLSRATSNFSDTSLLSTLFSSNSSNVPKIGIACSGGGYRAMLGGAGMIAAMDNRTDGANEHGLGGLLQSSTYLSGLSGGNWLTGTLAWNNWTSVQEIVDHMSESDSIWNITKSIVNPGGSNLTYTIERWESIVQEVQAKSDAGFNISLSDLWARALSYNFFPSLPDAGSALTWSSLRDVDVFKNGEMPLPITVADGRYPGTTVINLNATLFEFTPFEMGSWDPSLNAFTDVKYLGTNVTNGKPVNKDQCVSGYDNAGFVIATSASLFNEFSLEASTSTYYKMINSFANKYVNNLSQDDDDIAIYAANPFKDTEFVDRNYTSSIVDADDLFLVDGGEDGQNLPLVPLIKKERDLDVVFALDISDNTDESWPSGVCMTNTYERQYSKQGKGMAFPYVPDVNTFLNLGLTNKPTFFGCDAKNLTDLEYIPPLVVYIPNTKHSFNGNQSTLKMNYNVTERLGMIRNGFEAATMGNFTDDSNFLGCIGCAIIRRKQESLNATLPPECTKCFADYCWNGTLSTSANPELSGNSTYQSGAIASAISEATDGIPITALLGSSTSGNTTSNSTTSTSSNVTSNSNSSSNTTLNSNSSSSSISSSTARSSSSTANKANAAAISYANTNTLMSLLGAITALFGLI.

Residues 1–19 (MQLRNILQASSLISGLSLA) form the signal peptide. The PLA2c domain occupies 36-588 (PCPSDDTSLV…ADYCWNGTLS (553 aa)). N-linked (GlcNAc...) asparagine glycans are attached at residues Asn-47, Asn-80, Asn-94, Asn-125, Asn-162, Asn-181, Asn-193, Asn-217, Asn-279, Asn-309, Asn-365, Asn-390, Asn-491, Asn-515, Asn-524, Asn-543, Asn-567, Asn-584, Asn-598, Asn-630, Asn-634, Asn-642, Asn-648, Asn-652, and Asn-658. Residues 627-672 (TSGNTTSNSTTSTSSNVTSNSNSSSNTTLNSNSSSSSISSSTARSS) form a disordered region. Asn-680 is lipidated: GPI-anchor amidated asparagine. Residues 681-706 (AAAISYANTNTLMSLLGAITALFGLI) constitute a propeptide, removed in mature form.

Belongs to the lysophospholipase family. The GPI-anchor is attached to the protein in the endoplasmic reticulum and serves to target the protein to the cell surface. There, the glucosamine-inositol phospholipid moiety is cleaved off and the GPI-modified mannoprotein is covalently attached via its lipidless GPI glycan remnant to the 1,6-beta-glucan of the outer cell wall layer.

Its subcellular location is the secreted. It is found in the cell wall. The protein resides in the membrane. The enzyme catalyses a 1-acyl-sn-glycero-3-phosphocholine + H2O = sn-glycerol 3-phosphocholine + a fatty acid + H(+). It carries out the reaction 1-hexadecanoyl-sn-glycero-3-phosphoethanolamine + H2O = sn-glycero-3-phosphoethanolamine + hexadecanoate + H(+). The catalysed reaction is 1-hexadecanoyl-sn-glycero-3-phosphocholine + H2O = sn-glycerol 3-phosphocholine + hexadecanoate + H(+). It catalyses the reaction 1-hexadecanoyl-sn-glycero-3-phospho-L-serine + H2O = sn-glycero-3-phospho-L-serine + hexadecanoate + H(+). The enzyme catalyses 1,2-dihexadecanoyl-sn-glycero-3-phosphocholine + H2O = 1-hexadecanoyl-sn-glycero-3-phosphocholine + hexadecanoate + H(+). Functionally, sequentially removes both fatty acyl groups from diacylglycerophospholipids and therefore has both phospholipase A and lysophospholipase activities. However, it does not display transacylase activity. Substrate preference is phosphatidylserine &gt; phosphatidylinositol &gt; phosphatidylcholine &gt; phosphatidylethanolamine. The substrate specificity is pH- and ion-dependent. In contrast with activities observed at optimum pH 3.5, the order of substrate preference at pH 5.5 is phosphatidylserine = phosphatidylethanolamine &gt; phosphatidylcholine &gt; phosphatidylinositol. This chain is Lysophospholipase 2 (PLB2), found in Saccharomyces cerevisiae (strain ATCC 204508 / S288c) (Baker's yeast).